The following is a 343-amino-acid chain: L-threonine 3-dehydrogenase (343 aa).

C40 lines the Zn(2+) pocket. Catalysis depends on charge relay system residues T42 and H45. Zn(2+) is bound by residues H65, E66, C95, C98, C101, and C109. NAD(+) is bound by residues I177, D197, R202, 264-266 (LGI), and 288-289 (IY).

Belongs to the zinc-containing alcohol dehydrogenase family. As to quaternary structure, homotetramer. Zn(2+) serves as cofactor.

It localises to the cytoplasm. It carries out the reaction L-threonine + NAD(+) = (2S)-2-amino-3-oxobutanoate + NADH + H(+). The protein operates within amino-acid degradation; L-threonine degradation via oxydo-reductase pathway; glycine from L-threonine: step 1/2. Catalyzes the NAD(+)-dependent oxidation of L-threonine to 2-amino-3-ketobutyrate. This chain is L-threonine 3-dehydrogenase, found in Aliivibrio fischeri (strain MJ11) (Vibrio fischeri).